The chain runs to 179 residues: Fimbrial subunit ElfA (179 aa).

The first 21 residues, 1–21 (MKKSVLTAFITVVCATSSVMA), serve as a signal peptide directing secretion.

Belongs to the fimbrial protein family.

It localises to the fimbrium. Part of the elfADCG-ycbUVF fimbrial operon, which promotes adhesion of bacteria to different abiotic surfaces. ElfA is the major fimbrial subunit produced by this operon. The chain is Fimbrial subunit ElfA (elfA) from Escherichia coli (strain K12).